Reading from the N-terminus, the 348-residue chain is Protein pelota homolog (348 aa).

This sequence belongs to the eukaryotic release factor 1 family. Pelota subfamily. In terms of assembly, monomer. The cofactor is a divalent metal cation.

It localises to the cytoplasm. May function in recognizing stalled ribosomes, interact with stem-loop structures in stalled mRNA molecules, and effect endonucleolytic cleavage of the mRNA. May play a role in the release non-functional ribosomes and degradation of damaged mRNAs. Has endoribonuclease activity. The polypeptide is Protein pelota homolog (Methanococcus aeolicus (strain ATCC BAA-1280 / DSM 17508 / OCM 812 / Nankai-3)).